We begin with the raw amino-acid sequence, 634 residues long: Probable potassium transport system protein Kup (634 aa).

The next 12 helical transmembrane spans lie at alanine 19–leucine 39, valine 62–valine 82, phenylalanine 113–proline 133, glycine 150–glutamine 170, isoleucine 177–valine 197, isoleucine 225–alanine 245, tryptophan 259–leucine 279, leucine 291–isoleucine 311, isoleucine 349–phenylalanine 369, tyrosine 379–tryptophan 399, leucine 406–alanine 426, and valine 431–threonine 451.

The protein belongs to the HAK/KUP transporter (TC 2.A.72) family.

The protein resides in the cell inner membrane. It catalyses the reaction K(+)(in) + H(+)(in) = K(+)(out) + H(+)(out). Its function is as follows. Transport of potassium into the cell. Likely operates as a K(+):H(+) symporter. This Pseudomonas paraeruginosa (strain DSM 24068 / PA7) (Pseudomonas aeruginosa (strain PA7)) protein is Probable potassium transport system protein Kup.